A 229-amino-acid chain; its full sequence is RNA pyrophosphohydrolase (229 aa).

One can recognise a Nudix hydrolase domain in the interval 6 to 149; that stretch reads GFRPNVGIIL…KRGVYEMALT (144 aa). The short motif at 38–59 is the Nudix box element; that stretch reads GGIDRGETPEQAMFRELHEEVG. The disordered stretch occupies residues 191-229; it reads KPGMELPPGASFDPDPQNSVPAPLEALPTLPVPKKPLDA. The span at 220–229 shows a compositional bias: pro residues; the sequence is LPVPKKPLDA.

The protein belongs to the Nudix hydrolase family. RppH subfamily. A divalent metal cation serves as cofactor.

Its function is as follows. Accelerates the degradation of transcripts by removing pyrophosphate from the 5'-end of triphosphorylated RNA, leading to a more labile monophosphorylated state that can stimulate subsequent ribonuclease cleavage. This chain is RNA pyrophosphohydrolase, found in Acidovorax ebreus (strain TPSY) (Diaphorobacter sp. (strain TPSY)).